Consider the following 183-residue polypeptide: Large ribosomal subunit protein uL18 (183 aa).

The protein belongs to the universal ribosomal protein uL18 family. As to quaternary structure, part of the 50S ribosomal subunit. Contacts the 5S and 23S rRNAs.

This is one of the proteins that bind and probably mediate the attachment of the 5S RNA into the large ribosomal subunit, where it forms part of the central protuberance. The polypeptide is Large ribosomal subunit protein uL18 (Halobacterium salinarum (strain ATCC 29341 / DSM 671 / R1)).